Here is a 110-residue protein sequence, read N- to C-terminus: Circadian clock oscillator protein KaiB (110 aa).

This sequence belongs to the KaiB family. As to quaternary structure, the KaiABC complex composition changes during the circadian cycle to control KaiC phosphorylation. Complexes KaiC(6), KaiA(2-4):KaiC(6), KaiB(6):KaiC(6) and KaiC(6):KaiB(6):KaiA(12) are among the most important forms, many form cooperatively. Undergoes a major conformational rearrangment; in the free state forms homotetramers as a dimer of dimers. When bound to the CI domain of KaiC switches to a monomeric thioredoxin-fold (KaiB(fs)). KaiB(fs) binds CikA, leading it to dephosphorylate phospho-RpaA.

Its function is as follows. Key component of the KaiABC oscillator complex, which constitutes the main circadian regulator in cyanobacteria. Complex composition changes during the circadian cycle to control KaiC phosphorylation. KaiA stimulates KaiC autophosphorylation, while KaiB sequesters KaiA, leading to KaiC autodephosphorylation. Phospho-Ser-431 KaiC accumulation triggers binding of KaiB to form the KaiB(6):KaiC(6) complex, leading to changes in output regulators CikA and SasA. KaiB switches to a thioredoxin-like fold (KaiB(fs)) when bound to KaiC. KaiB(6):KaiC(6) formation exposes a site for KaiA binding that sequesters KaiA from KaiC, making the KaiC(6):KaiB(6):KaiA(12) complex that results in KaiC autodephosphorylation. A metamorphic protein which reversibly switches between an inactive tetrameric fold and a rare, thioredoxin-like monomeric fold (KaiB(fs)). KaiB(fs) binds phospho-KaiC, KaiA and CikA. KaiA and CikA compete for binding to KaiB(fs), and KaiB(fs) and SasA compete for binding to KaiC, thus the clock oscillator and output signal pathway are tightly coupled. The sequence is that of Circadian clock oscillator protein KaiB from Synechococcus sp. (strain RCC307).